We begin with the raw amino-acid sequence, 196 residues long: dITP/XTP pyrophosphatase (196 aa).

9–14 (TSNAGK) is a binding site for substrate. Residues E39 and D68 each coordinate Mg(2+). Residue D68 is the Proton acceptor of the active site. Substrate-binding positions include S69, 147 to 150 (FGYD), K170, and 175 to 176 (HR).

This sequence belongs to the HAM1 NTPase family. In terms of assembly, homodimer. Requires Mg(2+) as cofactor.

The enzyme catalyses XTP + H2O = XMP + diphosphate + H(+). It carries out the reaction dITP + H2O = dIMP + diphosphate + H(+). The catalysed reaction is ITP + H2O = IMP + diphosphate + H(+). Functionally, pyrophosphatase that catalyzes the hydrolysis of nucleoside triphosphates to their monophosphate derivatives, with a high preference for the non-canonical purine nucleotides XTP (xanthosine triphosphate), dITP (deoxyinosine triphosphate) and ITP. Seems to function as a house-cleaning enzyme that removes non-canonical purine nucleotides from the nucleotide pool, thus preventing their incorporation into DNA/RNA and avoiding chromosomal lesions. This Nostoc sp. (strain PCC 7120 / SAG 25.82 / UTEX 2576) protein is dITP/XTP pyrophosphatase.